The primary structure comprises 196 residues: Glycerol-3-phosphate acyltransferase (196 aa).

A run of 4 helical transmembrane segments spans residues 3-23 (NAVF…ILVS), 78-98 (VGVV…PVFY), 112-132 (VLLA…IVVF), and 154-174 (WLLL…LLLI).

This sequence belongs to the PlsY family. In terms of assembly, probably interacts with PlsX.

It is found in the cell inner membrane. It carries out the reaction an acyl phosphate + sn-glycerol 3-phosphate = a 1-acyl-sn-glycero-3-phosphate + phosphate. The protein operates within lipid metabolism; phospholipid metabolism. Functionally, catalyzes the transfer of an acyl group from acyl-phosphate (acyl-PO(4)) to glycerol-3-phosphate (G3P) to form lysophosphatidic acid (LPA). This enzyme utilizes acyl-phosphate as fatty acyl donor, but not acyl-CoA or acyl-ACP. The chain is Glycerol-3-phosphate acyltransferase from Methylobacillus flagellatus (strain ATCC 51484 / DSM 6875 / VKM B-1610 / KT).